We begin with the raw amino-acid sequence, 365 residues long: Tetraacyldisaccharide 4'-kinase (365 aa).

68–75 (VVGGAGKT) is an ATP binding site.

It belongs to the LpxK family.

The catalysed reaction is a lipid A disaccharide + ATP = a lipid IVA + ADP + H(+). It functions in the pathway glycolipid biosynthesis; lipid IV(A) biosynthesis; lipid IV(A) from (3R)-3-hydroxytetradecanoyl-[acyl-carrier-protein] and UDP-N-acetyl-alpha-D-glucosamine: step 6/6. Functionally, transfers the gamma-phosphate of ATP to the 4'-position of a tetraacyldisaccharide 1-phosphate intermediate (termed DS-1-P) to form tetraacyldisaccharide 1,4'-bis-phosphate (lipid IVA). This Chlamydia pneumoniae (Chlamydophila pneumoniae) protein is Tetraacyldisaccharide 4'-kinase.